A 154-amino-acid polypeptide reads, in one-letter code: Ribosomal RNA large subunit methyltransferase H (154 aa).

S-adenosyl-L-methionine contacts are provided by residues Leu70, Gly102, and Leu121 to Leu126.

Belongs to the RNA methyltransferase RlmH family. Homodimer.

Its subcellular location is the cytoplasm. The enzyme catalyses pseudouridine(1915) in 23S rRNA + S-adenosyl-L-methionine = N(3)-methylpseudouridine(1915) in 23S rRNA + S-adenosyl-L-homocysteine + H(+). In terms of biological role, specifically methylates the pseudouridine at position 1915 (m3Psi1915) in 23S rRNA. The sequence is that of Ribosomal RNA large subunit methyltransferase H from Geobacter sp. (strain M21).